A 142-amino-acid chain; its full sequence is Small ribosomal subunit protein bS16 (142 aa).

Residues 88–142 are disordered; it reads GAEGTLRQPEGKTPFVAPDNGSVIIPEAITPKAEKAEEAPAEDAAPAEDDAEKAE. Over residues 126–142 the composition is skewed to acidic residues; the sequence is APAEDAAPAEDDAEKAE.

Belongs to the bacterial ribosomal protein bS16 family.

The chain is Small ribosomal subunit protein bS16 from Kocuria rhizophila (strain ATCC 9341 / DSM 348 / NBRC 103217 / DC2201).